The sequence spans 352 residues: Protein-glutamate methylesterase/protein-glutamine glutaminase 2 (352 aa).

The Response regulatory domain maps to 1–116 (MVVDDSAVVR…KQFLTDSADE (116 aa)). D50 carries the 4-aspartylphosphate modification. The 191-residue stretch at 162–352 (AQTTERIVAI…MAREIVTQLQ (191 aa)) folds into the CheB-type methylesterase domain. Catalysis depends on residues S174, H200, and D296.

The protein belongs to the CheB family. Post-translationally, phosphorylated by CheA. Phosphorylation of the N-terminal regulatory domain activates the methylesterase activity.

Its subcellular location is the cytoplasm. It catalyses the reaction [protein]-L-glutamate 5-O-methyl ester + H2O = L-glutamyl-[protein] + methanol + H(+). The enzyme catalyses L-glutaminyl-[protein] + H2O = L-glutamyl-[protein] + NH4(+). Its function is as follows. Involved in chemotaxis. Part of a chemotaxis signal transduction system that modulates chemotaxis in response to various stimuli. Catalyzes the demethylation of specific methylglutamate residues introduced into the chemoreceptors (methyl-accepting chemotaxis proteins or MCP) by CheR. Also mediates the irreversible deamidation of specific glutamine residues to glutamic acid. The sequence is that of Protein-glutamate methylesterase/protein-glutamine glutaminase 2 from Xanthomonas axonopodis pv. citri (strain 306).